Here is a 162-residue protein sequence, read N- to C-terminus: Cyclic pyranopterin monophosphate synthase (162 aa).

Substrate contacts are provided by residues leucine 75–histidine 77 and methionine 113–glutamate 114. Aspartate 128 is a catalytic residue.

The protein belongs to the MoaC family. In terms of assembly, homohexamer; trimer of dimers.

It catalyses the reaction (8S)-3',8-cyclo-7,8-dihydroguanosine 5'-triphosphate = cyclic pyranopterin phosphate + diphosphate. The protein operates within cofactor biosynthesis; molybdopterin biosynthesis. Catalyzes the conversion of (8S)-3',8-cyclo-7,8-dihydroguanosine 5'-triphosphate to cyclic pyranopterin monophosphate (cPMP). This Burkholderia lata (strain ATCC 17760 / DSM 23089 / LMG 22485 / NCIMB 9086 / R18194 / 383) protein is Cyclic pyranopterin monophosphate synthase.